The primary structure comprises 345 residues: Phosphoribosylformylglycinamidine cyclo-ligase (345 aa).

Belongs to the AIR synthase family.

Its subcellular location is the cytoplasm. It carries out the reaction 2-formamido-N(1)-(5-O-phospho-beta-D-ribosyl)acetamidine + ATP = 5-amino-1-(5-phospho-beta-D-ribosyl)imidazole + ADP + phosphate + H(+). Its pathway is purine metabolism; IMP biosynthesis via de novo pathway; 5-amino-1-(5-phospho-D-ribosyl)imidazole from N(2)-formyl-N(1)-(5-phospho-D-ribosyl)glycinamide: step 2/2. This Actinobacillus succinogenes (strain ATCC 55618 / DSM 22257 / CCUG 43843 / 130Z) protein is Phosphoribosylformylglycinamidine cyclo-ligase.